We begin with the raw amino-acid sequence, 339 residues long: Anthranilate phosphoribosyltransferase (339 aa).

Residues Gly-81, 84-85, 91-94, 109-117, and Ser-121 each bind 5-phospho-alpha-D-ribose 1-diphosphate; these read GD, NIST, and KHGNRAASS. An anthranilate-binding site is contributed by Gly-81. Ser-93 lines the Mg(2+) pocket. An anthranilate-binding site is contributed by Asn-112. Arg-167 serves as a coordination point for anthranilate. Mg(2+) is bound by residues Asp-226 and Glu-227.

This sequence belongs to the anthranilate phosphoribosyltransferase family. Homodimer. The cofactor is Mg(2+).

The catalysed reaction is N-(5-phospho-beta-D-ribosyl)anthranilate + diphosphate = 5-phospho-alpha-D-ribose 1-diphosphate + anthranilate. The protein operates within amino-acid biosynthesis; L-tryptophan biosynthesis; L-tryptophan from chorismate: step 2/5. In terms of biological role, catalyzes the transfer of the phosphoribosyl group of 5-phosphorylribose-1-pyrophosphate (PRPP) to anthranilate to yield N-(5'-phosphoribosyl)-anthranilate (PRA). This is Anthranilate phosphoribosyltransferase from Maricaulis maris (strain MCS10) (Caulobacter maris).